Consider the following 302-residue polypeptide: Probable phytol kinase 1, chloroplastic (302 aa).

Residues Met-1–Val-57 constitute a chloroplast transit peptide. 7 consecutive transmembrane segments (helical) span residues Leu-65–Val-83, Leu-103–Pro-123, Phe-128–Ala-148, Leu-164–Phe-184, Pro-189–Gly-209, Leu-232–Val-252, and Val-263–Asp-283.

This sequence belongs to the polyprenol kinase family.

Its subcellular location is the plastid. It localises to the chloroplast membrane. It catalyses the reaction phytol + CTP = phytyl phosphate + CDP + H(+). The protein operates within cofactor biosynthesis; tocopherol biosynthesis. Functionally, involved in the activation and reutilization of phytol from chlorophyll degradation in plant metabolism, including tocopherol biosynthesis. Catalyzes the conversion of phytol to phytol monophosphate (PMP). The sequence is that of Probable phytol kinase 1, chloroplastic from Glycine max (Soybean).